Consider the following 37-residue polypeptide: Large ribosomal subunit protein bL36 (37 aa).

It belongs to the bacterial ribosomal protein bL36 family.

The polypeptide is Large ribosomal subunit protein bL36 (Deinococcus geothermalis (strain DSM 11300 / CIP 105573 / AG-3a)).